A 364-amino-acid chain; its full sequence is MSIEIARIKKSFGRTQVLNDISLDIPSGQMVALLGPSGSGKTTLLRIIAGLEHQSSGHIRFHGTDVSRLHARERKVGFVFQHYALFRHMTVFDNIAFGLTVLPRRDRPTAAAIKTKVTQLLEMVQLAHLADRFPAQLSGGQKQRVALARALAVEPQILLLDEPFGALDAQVRKELRRWLRQLHEELKFTSVFVTHDQEEATEVADRVVVMSQGNIEQADAPDRVWREPATRFVLEFMGEVNRLTGTVRGGQFHVGAHRWPLGYTPAYQGPVDLFLRPWEVDISRRTSLDSPLPVQVIEASPKGHYTQLVVQPLGWYHDPLTVVMAGDDVPQRGERLFVGLQNARLYHGDQRIEPHEALALAESA.

In terms of domain architecture, ABC transporter spans 3-237 (IEIARIKKSF…PATRFVLEFM (235 aa)). 35-42 (GPSGSGKT) lines the ATP pocket.

Belongs to the ABC transporter superfamily. Sulfate/tungstate importer (TC 3.A.1.6) family. In terms of assembly, the complex is composed of two ATP-binding proteins (CysA), two transmembrane proteins (CysT and CysW) and a solute-binding protein (CysP).

It is found in the cell inner membrane. It carries out the reaction sulfate(out) + ATP + H2O = sulfate(in) + ADP + phosphate + H(+). The enzyme catalyses thiosulfate(out) + ATP + H2O = thiosulfate(in) + ADP + phosphate + H(+). Its function is as follows. Part of the ABC transporter complex CysAWTP involved in sulfate/thiosulfate import. Responsible for energy coupling to the transport system. The protein is Sulfate/thiosulfate import ATP-binding protein CysA of Salmonella typhi.